Reading from the N-terminus, the 715-residue chain is Polyribonucleotide nucleotidyltransferase (715 aa).

Mg(2+)-binding residues include Asp-493 and Asp-499. The 60-residue stretch at Pro-560 to Ile-619 folds into the KH domain. Positions Gly-629–Lys-697 constitute an S1 motif domain.

It belongs to the polyribonucleotide nucleotidyltransferase family. The cofactor is Mg(2+).

It is found in the cytoplasm. The catalysed reaction is RNA(n+1) + phosphate = RNA(n) + a ribonucleoside 5'-diphosphate. Functionally, involved in mRNA degradation. Catalyzes the phosphorolysis of single-stranded polyribonucleotides processively in the 3'- to 5'-direction. In Burkholderia multivorans (strain ATCC 17616 / 249), this protein is Polyribonucleotide nucleotidyltransferase.